A 331-amino-acid chain; its full sequence is Fructose-1,6-bisphosphatase class 1 (331 aa).

4 residues coordinate Mg(2+): glutamate 100, aspartate 120, leucine 122, and aspartate 123. Residues aspartate 123 to serine 126, asparagine 216, tyrosine 243, tyrosine 261 to tyrosine 263, and lysine 273 each bind substrate. Residue glutamate 279 coordinates Mg(2+).

It belongs to the FBPase class 1 family. In terms of assembly, homotetramer. It depends on Mg(2+) as a cofactor.

The protein resides in the cytoplasm. The catalysed reaction is beta-D-fructose 1,6-bisphosphate + H2O = beta-D-fructose 6-phosphate + phosphate. It participates in carbohydrate biosynthesis; gluconeogenesis. The sequence is that of Fructose-1,6-bisphosphatase class 1 from Amoebophilus asiaticus (strain 5a2).